Here is a 276-residue protein sequence, read N- to C-terminus: Rhomboid protease GlpG (276 aa).

The next 6 helical transmembrane spans lie at 94–114 (GPFT…QNLL), 142–162 (AFMH…WYLG), 169–189 (IGSG…GFVQ), 192–212 (FSGP…GYVW), 229–249 (LILF…GMAI), and 252–272 (GAHV…TLHG). Ser-201 serves as the catalytic Nucleophile. Residue His-254 is part of the active site.

This sequence belongs to the peptidase S54 family.

It is found in the cell inner membrane. It carries out the reaction Cleaves type-1 transmembrane domains using a catalytic dyad composed of serine and histidine that are contributed by different transmembrane domains.. Functionally, rhomboid-type serine protease that catalyzes intramembrane proteolysis. In Klebsiella pneumoniae (strain 342), this protein is Rhomboid protease GlpG.